The sequence spans 237 residues: Flagellar brake protein YcgR (237 aa).

The region spanning 108-225 (QRRRQFRVTT…MERKIQSAVF (118 aa)) is the PilZ domain.

Belongs to the YcgR family. In terms of assembly, monomer. Interacts with the flagellar basal bodies.

It is found in the bacterial flagellum basal body. Functionally, acts as a flagellar brake, regulating swimming and swarming in a bis-(3'-5') cyclic diguanylic acid (c-di-GMP)-dependent manner. Binds 1 c-di-GMP dimer per subunit. Increasing levels of c-di-GMP lead to decreased motility. The protein is Flagellar brake protein YcgR of Serratia proteamaculans (strain 568).